The primary structure comprises 338 residues: Heat-inducible transcription repressor HrcA (338 aa).

Belongs to the HrcA family.

Its function is as follows. Negative regulator of class I heat shock genes (grpE-dnaK-dnaJ and groELS operons). Prevents heat-shock induction of these operons. This Streptomyces albus G protein is Heat-inducible transcription repressor HrcA.